We begin with the raw amino-acid sequence, 90 residues long: MAKEELLELDGIVDEVLPDSRYRVTLDNGVVVGAYASGRMRKNHIRILAGDRVTLELSVYDLTKGRINFRHKDERATGGGGARNSQFRRR.

The region spanning 1–72 (MAKEELLELD…TKGRINFRHK (72 aa)) is the S1-like domain.

Belongs to the IF-1 family. In terms of assembly, component of the 30S ribosomal translation pre-initiation complex which assembles on the 30S ribosome in the order IF-2 and IF-3, IF-1 and N-formylmethionyl-tRNA(fMet); mRNA recruitment can occur at any time during PIC assembly.

The protein localises to the cytoplasm. Functionally, one of the essential components for the initiation of protein synthesis. Stabilizes the binding of IF-2 and IF-3 on the 30S subunit to which N-formylmethionyl-tRNA(fMet) subsequently binds. Helps modulate mRNA selection, yielding the 30S pre-initiation complex (PIC). Upon addition of the 50S ribosomal subunit IF-1, IF-2 and IF-3 are released leaving the mature 70S translation initiation complex. The polypeptide is Translation initiation factor IF-1 2 (Paraburkholderia xenovorans (strain LB400)).